Consider the following 568-residue polypeptide: Proline--tRNA ligase (568 aa).

This sequence belongs to the class-II aminoacyl-tRNA synthetase family. ProS type 1 subfamily. As to quaternary structure, homodimer.

The protein localises to the cytoplasm. The enzyme catalyses tRNA(Pro) + L-proline + ATP = L-prolyl-tRNA(Pro) + AMP + diphosphate. Functionally, catalyzes the attachment of proline to tRNA(Pro) in a two-step reaction: proline is first activated by ATP to form Pro-AMP and then transferred to the acceptor end of tRNA(Pro). As ProRS can inadvertently accommodate and process non-cognate amino acids such as alanine and cysteine, to avoid such errors it has two additional distinct editing activities against alanine. One activity is designated as 'pretransfer' editing and involves the tRNA(Pro)-independent hydrolysis of activated Ala-AMP. The other activity is designated 'posttransfer' editing and involves deacylation of mischarged Ala-tRNA(Pro). The misacylated Cys-tRNA(Pro) is not edited by ProRS. The chain is Proline--tRNA ligase from Listeria innocua serovar 6a (strain ATCC BAA-680 / CLIP 11262).